The primary structure comprises 503 residues: Probable cytosol aminopeptidase (503 aa).

Mn(2+)-binding residues include lysine 270 and aspartate 275. The active site involves lysine 282. Mn(2+)-binding residues include aspartate 293, aspartate 352, and glutamate 354. The active site involves arginine 356.

Belongs to the peptidase M17 family. Mn(2+) is required as a cofactor.

It localises to the cytoplasm. The enzyme catalyses Release of an N-terminal amino acid, Xaa-|-Yaa-, in which Xaa is preferably Leu, but may be other amino acids including Pro although not Arg or Lys, and Yaa may be Pro. Amino acid amides and methyl esters are also readily hydrolyzed, but rates on arylamides are exceedingly low.. The catalysed reaction is Release of an N-terminal amino acid, preferentially leucine, but not glutamic or aspartic acids.. Functionally, presumably involved in the processing and regular turnover of intracellular proteins. Catalyzes the removal of unsubstituted N-terminal amino acids from various peptides. This chain is Probable cytosol aminopeptidase, found in Shigella boydii serotype 18 (strain CDC 3083-94 / BS512).